The sequence spans 454 residues: UPF0210 protein EUBREC_1565 (454 aa).

It belongs to the UPF0210 family. Homodimer.

The protein is UPF0210 protein EUBREC_1565 of Agathobacter rectalis (strain ATCC 33656 / DSM 3377 / JCM 17463 / KCTC 5835 / VPI 0990) (Eubacterium rectale).